The chain runs to 284 residues: Bifunctional protein FolD (284 aa).

Residues 165 to 167 (GRS) and S190 each bind NADP(+).

The protein belongs to the tetrahydrofolate dehydrogenase/cyclohydrolase family. Homodimer.

The catalysed reaction is (6R)-5,10-methylene-5,6,7,8-tetrahydrofolate + NADP(+) = (6R)-5,10-methenyltetrahydrofolate + NADPH. It carries out the reaction (6R)-5,10-methenyltetrahydrofolate + H2O = (6R)-10-formyltetrahydrofolate + H(+). The protein operates within one-carbon metabolism; tetrahydrofolate interconversion. Catalyzes the oxidation of 5,10-methylenetetrahydrofolate to 5,10-methenyltetrahydrofolate and then the hydrolysis of 5,10-methenyltetrahydrofolate to 10-formyltetrahydrofolate. The sequence is that of Bifunctional protein FolD from Streptococcus pyogenes serotype M28 (strain MGAS6180).